The primary structure comprises 81 residues: Small ribosomal subunit protein bS18A (81 aa).

The protein belongs to the bacterial ribosomal protein bS18 family. In terms of assembly, part of the 30S ribosomal subunit. Forms a tight heterodimer with protein bS6.

In terms of biological role, binds as a heterodimer with protein bS6 to the central domain of the 16S rRNA, where it helps stabilize the platform of the 30S subunit. The chain is Small ribosomal subunit protein bS18A from Saccharopolyspora erythraea (strain ATCC 11635 / DSM 40517 / JCM 4748 / NBRC 13426 / NCIMB 8594 / NRRL 2338).